An 85-amino-acid polypeptide reads, in one-letter code: MQNDAGEVVDLYIPRKCSSTNRIIGAKDHASIQINFAEVDPTTGRMTGQYKTYAICGYIRQMGESDDCLKRLAIKDKIIDAKMDA.

The protein belongs to the eukaryotic ribosomal protein eS21 family. In terms of assembly, component of the 40S small ribosomal subunit.

It localises to the cytoplasm. It is found in the cytosol. The protein resides in the rough endoplasmic reticulum. The protein is Small ribosomal subunit protein eS21 (RPS21) of Branchiostoma belcheri (Amphioxus).